The primary structure comprises 200 residues: Small ribosomal subunit protein eS1 (200 aa).

The protein belongs to the eukaryotic ribosomal protein eS1 family. As to quaternary structure, part of the 30S ribosomal subunit.

The chain is Small ribosomal subunit protein eS1 from Thermococcus kodakarensis (strain ATCC BAA-918 / JCM 12380 / KOD1) (Pyrococcus kodakaraensis (strain KOD1)).